The sequence spans 565 residues: UV-stimulated scaffold protein A homolog (565 aa).

The segment at 11-156 is VHS-like; it reads RKNLNRILQE…VTLRKTKFVD (146 aa). Residues 155–215 are a coiled coil; that stretch reads VDYENGEKKI…ELETTMEMLV (61 aa). Residues 441–468 form a UVSSA-type zinc finger; it reads DRECLAKLPSGALCKRKDMFKCPLHGPL. Zn(2+) contacts are provided by Cys444, Cys454, Cys462, and His465. A coiled-coil region spans residues 480–510; that stretch reads DEDRLKEIDRKERKRLKEAEEFSRKIVKEYE. Disordered stretches follow at residues 510 to 530 and 542 to 565; these read ESKT…SRLQ and VSAD…FSHL.

It belongs to the UVSSA family.

The protein localises to the chromosome. Functionally, factor involved in transcription-coupled nucleotide excision repair (TC-NER) in response to UV damage. TC-NER allows RNA polymerase II-blocking lesions to be rapidly removed from the transcribed strand of active genes. The sequence is that of UV-stimulated scaffold protein A homolog from Caenorhabditis briggsae.